A 1231-amino-acid chain; its full sequence is Chromosome-associated kinesin KIF4 (1231 aa).

The Kinesin motor domain occupies 9–337; sequence PVRVALRCRP…LRYADRARKI (329 aa). ATP is bound at residue 88–95; sequence GQTGSGKT. A coiled-coil region spans residues 351–1000; sequence ELNHLKQQVQ…IKQKLTLLQV (650 aa). At S395 the chain carries Phosphoserine. Position 800 is a phosphothreonine (T800). Residues S802, S811, and S816 each carry the phosphoserine modification. A globular region spans residues 1001–1231; the sequence is ASKQKPHLTR…GCSPIQEESH (231 aa). Residues 1189 to 1212 form a disordered region; it reads HPELKSIASESQENKAIGKKKKRA. S1224 and S1230 each carry phosphoserine.

Belongs to the TRAFAC class myosin-kinesin ATPase superfamily. Kinesin family. Chromokinesin subfamily. The cofactor is [2Fe-2S] cluster. Requires [4Fe-4S] cluster as cofactor. As to expression, expressed in pyramidal cells in juvenile hippocampus, granular cells in juvenile cerebellar cortex and in adult spleen.

It localises to the nucleus. The protein localises to the chromosome. It is found in the cytoplasm. Its subcellular location is the cytoskeleton. In terms of biological role, iron-sulfur (Fe-S) cluster binding motor protein that has a role in chromosome segregation during mitosis. Required for mitotic chromosomal positioning and bipolar spindle stabilization. The protein is Chromosome-associated kinesin KIF4 (Kif4) of Mus musculus (Mouse).